The following is a 498-amino-acid chain: MTQPTITQDTARQPNPNITLYDTMQRQKVPFVPGTPGYVGMYLCGPTVYSDAHLGHAKKEVAFDVIRRALTHFGYQVRYVSNITDVGHLLNDADEGEDKLQARARLEQLEPMEVADKYFWSFFRDMDALNVLRPSINPRATGHIQEQIKLIEELIEKGHAYESAGSVYFDVRSWPEYGKLSGRKLDDQEEGTREAVRDEKRDPRDFALWKKAEPEHLMRWDSPWSVGFPGWHIECSAMSLKYLGEGFDIHGGGLDLQFPHHEAEIAQAEAAGHHFARYWMHNNMLTIGGEKMSKSKGNFTTIQDILKKYDPMVVRFLLVSSHYRSVTEMNEEAFASAANGYRRLSETLHEIERRLKDAPAGSDTALDSKIAARVTEFEDAMRDDFNTPKAVASLFGLTGELNTALNAGPVGRDTLERARDAYRSLGGDVLGLFAETGSAASVAQDDASVIDALMDLVLKARQNYRLQKQYAEADELRETLGKAGITVEDTKDGARWKR.

Cys-44 provides a ligand contact to Zn(2+). Residues 46–56 (PTVYSDAHLGH) carry the 'HIGH' region motif. Cys-235, His-260, and Glu-264 together coordinate Zn(2+). The 'KMSKS' region motif lies at 291-295 (KMSKS). An ATP-binding site is contributed by Lys-294.

It belongs to the class-I aminoacyl-tRNA synthetase family. In terms of assembly, monomer. Requires Zn(2+) as cofactor.

It localises to the cytoplasm. It catalyses the reaction tRNA(Cys) + L-cysteine + ATP = L-cysteinyl-tRNA(Cys) + AMP + diphosphate. The sequence is that of Cysteine--tRNA ligase (cysS) from Deinococcus radiodurans (strain ATCC 13939 / DSM 20539 / JCM 16871 / CCUG 27074 / LMG 4051 / NBRC 15346 / NCIMB 9279 / VKM B-1422 / R1).